The following is a 206-amino-acid chain: Guanylate kinase (206 aa).

Positions 6–185 (GAILVLSGPS…AAKTLRIIAD (180 aa)) constitute a Guanylate kinase-like domain. 13–20 (GPSGAGKS) is a binding site for ATP.

Belongs to the guanylate kinase family.

The protein localises to the cytoplasm. It catalyses the reaction GMP + ATP = GDP + ADP. Essential for recycling GMP and indirectly, cGMP. The polypeptide is Guanylate kinase (Sulfurimonas denitrificans (strain ATCC 33889 / DSM 1251) (Thiomicrospira denitrificans (strain ATCC 33889 / DSM 1251))).